Here is a 63-residue protein sequence, read N- to C-terminus: Beta-defensin 38 (63 aa).

A signal peptide spans Met1 to Ala21. Intrachain disulfides connect Cys29–Cys58, Cys36–Cys51, and Cys41–Cys59.

Belongs to the beta-defensin family. As to expression, only expressed in epididymis (caput, corpus and cauda).

It is found in the secreted. Functionally, synthetic Defb38 kills both Gram-negative (E.coli and P.aeruginosa) and Gram-positive (E.faecium) bacteria. This chain is Beta-defensin 38 (Defb38), found in Mus musculus (Mouse).